Consider the following 407-residue polypeptide: Fructose-1,6-bisphosphatase, chloroplastic (407 aa).

The transit peptide at 1–50 (MAAATASSQLIFSKPYSPSRLCPFQLCVFDAKSVLSSSRRKHVNGSGVRC) directs the protein to the chloroplast. Mg(2+) contacts are provided by Glu-126, Glu-155, Asp-176, Leu-178, and Asp-179. Residue 179–182 (DGSS) participates in substrate binding. A disulfide bridge connects residues Cys-203 and Cys-223. Substrate contacts are provided by Asn-287, Tyr-319, Tyr-337, Tyr-339, and Lys-349. Residue Glu-355 coordinates Mg(2+).

The protein belongs to the FBPase class 1 family. In terms of assembly, homotetramer. Mg(2+) is required as a cofactor.

The protein resides in the plastid. It is found in the chloroplast stroma. It carries out the reaction beta-D-fructose 1,6-bisphosphate + H2O = beta-D-fructose 6-phosphate + phosphate. The protein operates within carbohydrate biosynthesis; Calvin cycle. This chain is Fructose-1,6-bisphosphatase, chloroplastic (FBP), found in Pisum sativum (Garden pea).